A 469-amino-acid polypeptide reads, in one-letter code: E3 ubiquitin-protein ligase TRIM21 (469 aa).

The RING-type zinc-finger motif lies at 16-55; that stretch reads CSICLDPMVEPMSIECGHSFCQECISEVGKEGGSVCPVCR. A B box-type zinc finger spans residues 87 to 128; that stretch reads PHGELCVVHREKIHLFCEEDGKALCWVCSQSQKHRDHPMVPI. Zn(2+) is bound by residues cysteine 92, histidine 95, cysteine 114, and histidine 120. Residues 128–245 are a coiled coil; it reads IEEAAQEYQE…RRGSALELLQ (118 aa). Serine 266 bears the Phosphoserine mark. The B30.2/SPRY domain maps to 268–467; the sequence is DLRNVFYVPG…APLILCPLKT (200 aa).

Belongs to the TRIM/RBCC family. Homotrimer. Interacts (via C-terminus) with IRF8 (via C-terminus). Component of a SCF(SKP2)-like complex containing CUL1, SKP1, TRIM21 and SKP2. Interacts with CALR, CUL1, FBXW11, HSPA5, IKBKB, IRF3, SKP1 and VCP. Interacts with SKP2; the interaction with SKP2 does not depend on an intact F-box domain. Interacts (via N-terminus and C-terminus) with DCP2 (via N-terminus and C-terminus). Interacts with ULK1, BECN1 and with ATG8 family members, including GABARAP, GABARAPL1, GABARAPL2 and MAP1LC3C/LC3C. Interacts with TRIM21 and SQSTM1/sequestosome 1. Interacts with IRF3. Interacts (via the SPRY domain) with NMI (via coiled-coil domain); the interaction promotes 'Lys-63'-linked ubiquitination of NMI. Interacts with IFI35 and NMI; the interaction facilitates NMI-IFI35 complex formation. Autoubiquitinated; does not lead to its proteasomal degradation. Deubiquitinated by USP4; leading to its stabilization.

It is found in the cytoplasm. Its subcellular location is the cytoplasmic vesicle. The protein resides in the autophagosome. The protein localises to the nucleus. It localises to the P-body. It is found in the stress granule. It catalyses the reaction S-ubiquitinyl-[E2 ubiquitin-conjugating enzyme]-L-cysteine + [acceptor protein]-L-lysine = [E2 ubiquitin-conjugating enzyme]-L-cysteine + N(6)-ubiquitinyl-[acceptor protein]-L-lysine.. The protein operates within protein modification; protein ubiquitination. In terms of biological role, E3 ubiquitin-protein ligase whose activity is dependent on E2 enzymes, UBE2D1, UBE2D2, UBE2E1 and UBE2E2. Forms a ubiquitin ligase complex in cooperation with the E2 UBE2D2 that is used not only for the ubiquitination of USP4 and IKBKB but also for its self-ubiquitination. Component of cullin-RING-based SCF (SKP1-CUL1-F-box protein) E3 ubiquitin-protein ligase complexes such as SCF(SKP2)-like complexes. A TRIM21-containing SCF(SKP2)-like complex is shown to mediate ubiquitination of CDKN1B ('Thr-187' phosphorylated-form), thereby promoting its degradation by the proteasome. Monoubiquitinates IKBKB that will negatively regulates Tax-induced NF-kappa-B signaling. Negatively regulates IFN-beta production post-pathogen recognition by catalyzing polyubiquitin-mediated degradation of IRF3. Mediates the ubiquitin-mediated proteasomal degradation of IgG1 heavy chain, which is linked to the VCP-mediated ER-associated degradation (ERAD) pathway. Promotes IRF8 ubiquitination, which enhanced the ability of IRF8 to stimulate cytokine genes transcription in macrophages. Plays a role in the regulation of the cell cycle progression. Enhances the decapping activity of DCP2. Exists as a ribonucleoprotein particle present in all mammalian cells studied and composed of a single polypeptide and one of four small RNA molecules. At least two isoforms are present in nucleated and red blood cells, and tissue specific differences in RO/SSA proteins have been identified. The common feature of these proteins is their ability to bind HY RNAs.2. Involved in the regulation of innate immunity and the inflammatory response in response to IFNG/IFN-gamma. Organizes autophagic machinery by serving as a platform for the assembly of ULK1, Beclin 1/BECN1 and ATG8 family members and recognizes specific autophagy targets, thus coordinating target recognition with assembly of the autophagic apparatus and initiation of autophagy. Also regulates autophagy through FIP200/RB1CC1 ubiquitination and subsequent decreased protein stability. Represses the innate antiviral response by facilitating the formation of the NMI-IFI35 complex through 'Lys-63'-linked ubiquitination of NMI. During viral infection, promotes cell pyroptosis by mediating 'Lys-6'-linked ubiquitination of ISG12a/IFI27, facilitating its translocation into the mitochondria and subsequent CASP3 activation. When up-regulated through the IFN/JAK/STAT signaling pathway, promotes 'Lys-27'-linked ubiquitination of MAVS, leading to the recruitment of TBK1 and up-regulation of innate immunity. Mediates 'Lys-63'-linked polyubiquitination of G3BP1 in response to heat shock, leading to stress granule disassembly. This is E3 ubiquitin-protein ligase TRIM21 (TRIM21) from Bos taurus (Bovine).